A 303-amino-acid polypeptide reads, in one-letter code: MEHIFLALRSPGPELFQLGPFSLRWYGLLIAISVLVGLNLSSELASKKGLKKSLINDLLPILVLASVIGARIYYVAFEWRNYTGKNFWSSINFLNLNIPIPSALEIWGGGIAIHGALIMGTLSIIFFCRWRQEHFWDVIDVLVPSVALGQAIGRWGNFFNNEAFGIPTNLPWKLFIPYRFRPEIFSTIDYFHPTFLYESVWNIFVFGILIFLFRKANKKDLKLPPGSLSCLYLITYSLGRFWIEGLRTDPLCLGGVPPFCEGGLRIAQLISLFLISAGLLGIWRIYVSKKALPDPSSMNGRNQ.

Transmembrane regions (helical) follow at residues 18 to 38 (LGPF…LVGL), 58 to 78 (LLPI…VAFE), 106 to 126 (IWGG…SIIF), and 133 to 153 (EHFW…QAIG). Arg154 serves as a coordination point for a 1,2-diacyl-sn-glycero-3-phospho-(1'-sn-glycerol). 3 consecutive transmembrane segments (helical) span residues 193 to 213 (PTFL…IFLF), 223 to 243 (LPPG…RFWI), and 266 to 286 (IAQL…WRIY).

It belongs to the Lgt family.

The protein resides in the cell inner membrane. The catalysed reaction is L-cysteinyl-[prolipoprotein] + a 1,2-diacyl-sn-glycero-3-phospho-(1'-sn-glycerol) = an S-1,2-diacyl-sn-glyceryl-L-cysteinyl-[prolipoprotein] + sn-glycerol 1-phosphate + H(+). It participates in protein modification; lipoprotein biosynthesis (diacylglyceryl transfer). Functionally, catalyzes the transfer of the diacylglyceryl group from phosphatidylglycerol to the sulfhydryl group of the N-terminal cysteine of a prolipoprotein, the first step in the formation of mature lipoproteins. The sequence is that of Phosphatidylglycerol--prolipoprotein diacylglyceryl transferase from Prochlorococcus marinus (strain NATL2A).